The sequence spans 126 residues: Histone H2B 1.2 (126 aa).

Low complexity predominate over residues 1–12; it reads MPEPAKSAPAPK. Residues 1–35 are disordered; it reads MPEPAKSAPAPKKGSKKAVTKTPKKDGKKRRKSRK. An N6-acetyllysine mark is found at Lys6 and Lys13. A Phosphoserine modification is found at Ser15. An N6-acetyllysine mark is found at Lys16 and Lys21. An O-linked (GlcNAc) serine glycan is attached at Ser113. Lys121 is covalently cross-linked (Glycyl lysine isopeptide (Lys-Gly) (interchain with G-Cter in ubiquitin)).

Belongs to the histone H2B family. The nucleosome is a histone octamer containing two molecules each of H2A, H2B, H3 and H4 assembled in one H3-H4 heterotetramer and two H2A-H2B heterodimers. The octamer wraps approximately 147 bp of DNA. Monoubiquitination of Lys-121 by BRE1 gives a specific tag for epigenetic transcriptional activation and is also prerequisite for histone H3 'Lys-4' and 'Lys-79' methylation. In terms of processing, phosphorylated on Ser-15 during developmentally programmed apoptosis; which may facilitate apoptotic chromatin condensation. Post-translationally, glcNAcylation at Ser-113 promotes monoubiquitination of Lys-121. It fluctuates in response to extracellular glucose, and associates with transcribed genes.

Its subcellular location is the nucleus. The protein localises to the chromosome. Its function is as follows. Core component of nucleosome. Nucleosomes wrap and compact DNA into chromatin, limiting DNA accessibility to the cellular machineries which require DNA as a template. Histones thereby play a central role in transcription regulation, DNA repair, DNA replication and chromosomal stability. DNA accessibility is regulated via a complex set of post-translational modifications of histones, also called histone code, and nucleosome remodeling. This chain is Histone H2B 1.2, found in Xenopus laevis (African clawed frog).